The chain runs to 329 residues: DNA-directed RNA polymerase subunit alpha (329 aa).

The interval Met-1–Arg-235 is alpha N-terminal domain (alpha-NTD). The alpha C-terminal domain (alpha-CTD) stretch occupies residues Phe-249–Glu-329.

It belongs to the RNA polymerase alpha chain family. Homodimer. The RNAP catalytic core consists of 2 alpha, 1 beta, 1 beta' and 1 omega subunit. When a sigma factor is associated with the core the holoenzyme is formed, which can initiate transcription.

It catalyses the reaction RNA(n) + a ribonucleoside 5'-triphosphate = RNA(n+1) + diphosphate. DNA-dependent RNA polymerase catalyzes the transcription of DNA into RNA using the four ribonucleoside triphosphates as substrates. This chain is DNA-directed RNA polymerase subunit alpha, found in Buchnera aphidicola subsp. Acyrthosiphon pisum (strain APS) (Acyrthosiphon pisum symbiotic bacterium).